The chain runs to 308 residues: Very-long-chain enoyl-CoA reductase (308 aa).

The Cytoplasmic portion of the chain corresponds to 1-86 (MKHYEVEIRD…YFRDLGAQIS (86 aa)). An N6-acetyllysine modification is found at Lys22. Ser58 is modified (phosphoserine). An N6-acetyllysine modification is found at Lys60. Residues 87 to 106 (WVTVFLTEYAGPLFIYLLFY) form a helical membrane-spanning segment. Residues 107-124 (FRVPFIYGRKYDFTSSRH) are Lumenal-facing. The chain crosses the membrane as a helical span at residues 125–147 (TVVHLACMCHSFHYIKRLLETLF). The Cytoplasmic segment spans residues 148 to 158 (VHRFSHGTMPL). Residues 159 to 180 (RNIFKNCTYYWGFAAWMAYYIN) traverse the membrane as a helical segment. Residues 181-189 (HPLYTPPTY) lie on the Lumenal side of the membrane. A helical membrane pass occupies residues 190–216 (GVQQVKLALAVFVICQLGNFSIHMALR). The Cytoplasmic segment spans residues 217-245 (DLRPAGSKTRKIPYPTKNPFTWLFLLVSC). Residues 246-262 (PNYTYEVGSWIGFAILT) form a helical membrane-spanning segment. The Lumenal portion of the chain corresponds to 263–264 (QC). The helical transmembrane segment at 265–292 (VPVALFSLVGFTQMTIWAKGKHRSYLKE) threads the bilayer. The Cytoplasmic portion of the chain corresponds to 293–308 (FRDYPPLRMPIIPFLL).

It belongs to the steroid 5-alpha reductase family. As to quaternary structure, interacts with ELOVL1 and LASS2. Post-translationally, glycosylated.

The protein localises to the endoplasmic reticulum membrane. The catalysed reaction is a very-long-chain 2,3-saturated fatty acyl-CoA + NADP(+) = a very-long-chain (2E)-enoyl-CoA + NADPH + H(+). It carries out the reaction octadecanoyl-CoA + NADP(+) = (2E)-octadecenoyl-CoA + NADPH + H(+). The enzyme catalyses (2E,7Z,10Z,13Z,16Z)-docosapentaenoyl-CoA + NADPH + H(+) = (7Z,10Z,13Z,16Z)-docosatetraenoyl-CoA + NADP(+). It catalyses the reaction (2E,7Z,10Z,13Z,16Z,19Z)-docosahexaenoyl-CoA + NADPH + H(+) = (7Z,10Z,13Z,16Z,19Z)-docosapentaenoyl-CoA + NADP(+). The catalysed reaction is (2E,8Z,11Z,14Z)-eicosatetraenoyl-CoA + NADPH + H(+) = (8Z,11Z,14Z)-eicosatrienoyl-CoA + NADP(+). It carries out the reaction (2E)-hexadecenoyl-CoA + NADPH + H(+) = hexadecanoyl-CoA + NADP(+). It participates in lipid metabolism; fatty acid biosynthesis. Its pathway is lipid metabolism; sphingolipid metabolism. Its function is as follows. Involved in both the production of very long-chain fatty acids for sphingolipid synthesis and the degradation of the sphingosine moiety in sphingolipids through the sphingosine 1-phosphate metabolic pathway. Catalyzes the last of the four reactions of the long-chain fatty acids elongation cycle. This endoplasmic reticulum-bound enzymatic process, allows the addition of 2 carbons to the chain of long- and very long-chain fatty acids/VLCFAs per cycle. This enzyme reduces the trans-2,3-enoyl-CoA fatty acid intermediate to an acyl-CoA that can be further elongated by entering a new cycle of elongation. Thereby, it participates in the production of VLCFAs of different chain lengths that are involved in multiple biological processes as precursors of membrane lipids and lipid mediators. Catalyzes the saturation step of the sphingosine 1-phosphate metabolic pathway, the conversion of trans-2-hexadecenoyl-CoA to palmitoyl-CoA. This is Very-long-chain enoyl-CoA reductase (Tecr) from Mus musculus (Mouse).